Here is a 103-residue protein sequence, read N- to C-terminus: Fe-S cluster assembly protein DRE2 (103 aa).

Positions 19–103 are disordered; the sequence is KQDPRHRIPM…EGDEINFDEL (85 aa). C42, C50, C53, and C55 together coordinate [2Fe-2S] cluster. Residues 42-55 form a fe-S binding site A region; sequence CRENKARKCSNCTC. Residues C70, C73, C81, and C84 each coordinate [4Fe-4S] cluster. 2 consecutive short sequence motifs (cx2C motif) follow at residues 70–73 and 81–84; these read CGSC and CSSC. The interval 70 to 84 is fe-S binding site B; sequence CGSCHLGDPFRCSSC.

It belongs to the anamorsin family. As to quaternary structure, monomer. Interacts with TAH18. Interacts with MIA40. It depends on [4Fe-4S] cluster as a cofactor.

It localises to the cytoplasm. Its subcellular location is the mitochondrion intermembrane space. Functionally, component of the cytosolic iron-sulfur (Fe-S) protein assembly (CIA) machinery required for the maturation of extramitochondrial Fe-S proteins. Part of an electron transfer chain functioning in an early step of cytosolic Fe-S biogenesis, facilitating the de novo assembly of a [4Fe-4S] cluster on the scaffold complex CFD1-NBP35. Electrons are transferred to DRE2 from NADPH via the FAD- and FMN-containing protein TAH18. TAH18-DRE2 are also required for the assembly of the diferric tyrosyl radical cofactor of ribonucleotide reductase (RNR), probably by providing electrons for reduction during radical cofactor maturation in the catalytic small subunit RNR2. This Enterocytozoon bieneusi (strain H348) (Microsporidian parasite) protein is Fe-S cluster assembly protein DRE2 (DRE2).